The primary structure comprises 224 residues: V-type ATP synthase subunit D (224 aa).

Positions 190–224 (REAGYTQKKIKAKIEGKNKEAREAAAATSHGSAAD) are disordered. A compositionally biased stretch (basic and acidic residues) spans 201 to 212 (AKIEGKNKEARE). Residues 213–224 (AAAATSHGSAAD) are compositionally biased toward low complexity.

Belongs to the V-ATPase D subunit family.

Produces ATP from ADP in the presence of a proton gradient across the membrane. This is V-type ATP synthase subunit D (atpD) from Deinococcus radiodurans (strain ATCC 13939 / DSM 20539 / JCM 16871 / CCUG 27074 / LMG 4051 / NBRC 15346 / NCIMB 9279 / VKM B-1422 / R1).